The primary structure comprises 303 residues: Quinolinate synthase (303 aa).

His-24 and Ser-41 together coordinate iminosuccinate. Cys-86 serves as a coordination point for [4Fe-4S] cluster. Residues 112-114 and Ser-129 each bind iminosuccinate; that span reads YVN. Position 172 (Cys-172) interacts with [4Fe-4S] cluster. Iminosuccinate contacts are provided by residues 198–200 and Thr-215; that span reads HPE. Cys-260 provides a ligand contact to [4Fe-4S] cluster.

The protein belongs to the quinolinate synthase family. Type 2 subfamily. [4Fe-4S] cluster is required as a cofactor.

The protein resides in the cytoplasm. The catalysed reaction is iminosuccinate + dihydroxyacetone phosphate = quinolinate + phosphate + 2 H2O + H(+). The protein operates within cofactor biosynthesis; NAD(+) biosynthesis; quinolinate from iminoaspartate: step 1/1. In terms of biological role, catalyzes the condensation of iminoaspartate with dihydroxyacetone phosphate to form quinolinate. This chain is Quinolinate synthase, found in Alkaliphilus metalliredigens (strain QYMF).